A 519-amino-acid polypeptide reads, in one-letter code: Laccase-2 (519 aa).

A signal peptide spans 1–20 (MGLQRFSFFVTLALVARSLA). 2 consecutive Plastocyanin-like domains span residues 22–147 (IGPV…FVVY) and 159–301 (VDNE…ILRY). An N-linked (GlcNAc...) asparagine glycan is attached at asparagine 74. Cu cation is bound by residues histidine 84, histidine 86, histidine 129, and histidine 131. Cystine bridges form between cysteine 105–cysteine 508 and cysteine 137–cysteine 225. Asparagine 161, asparagine 228, asparagine 237, asparagine 271, asparagine 353, and asparagine 361 each carry an N-linked (GlcNAc...) asparagine glycan. One can recognise a Plastocyanin-like 3 domain in the interval 368 to 490 (TVPVLLQILS…AGFAIVFAED (123 aa)). Positions 415, 418, and 420 each coordinate Cu cation. A glycan (N-linked (GlcNAc...) asparagine) is linked at asparagine 456. Histidine 472, cysteine 473, histidine 474, and histidine 478 together coordinate Cu cation.

This sequence belongs to the multicopper oxidase family. Requires Cu cation as cofactor.

It localises to the secreted. The enzyme catalyses 4 hydroquinone + O2 = 4 benzosemiquinone + 2 H2O. Lignin degradation and detoxification of lignin-derived products. This Trametes versicolor (White-rot fungus) protein is Laccase-2 (LCC2).